Reading from the N-terminus, the 193-residue chain is Glycerol-3-phosphate acyltransferase (193 aa).

Transmembrane regions (helical) follow at residues 2-22, 51-71, 78-98, 112-132, and 154-174; these read AFII…AVIV, QAAF…VLIA, GVSL…PVYF, VLLG…VIVV, and IIAG…LLIW.

The protein belongs to the PlsY family. As to quaternary structure, probably interacts with PlsX.

It is found in the cell inner membrane. The enzyme catalyses an acyl phosphate + sn-glycerol 3-phosphate = a 1-acyl-sn-glycero-3-phosphate + phosphate. The protein operates within lipid metabolism; phospholipid metabolism. Functionally, catalyzes the transfer of an acyl group from acyl-phosphate (acyl-PO(4)) to glycerol-3-phosphate (G3P) to form lysophosphatidic acid (LPA). This enzyme utilizes acyl-phosphate as fatty acyl donor, but not acyl-CoA or acyl-ACP. In Coxiella burnetii (strain CbuG_Q212) (Coxiella burnetii (strain Q212)), this protein is Glycerol-3-phosphate acyltransferase.